We begin with the raw amino-acid sequence, 432 residues long: 23S rRNA (uracil(1939)-C(5))-methyltransferase RlmD (432 aa).

A TRAM domain is found at 1 to 53 (MPIGKIESLDHEARGITRQEGKAIFVDGALPGETVEYASFRRKSKFELAHLVH). [4Fe-4S] cluster is bound by residues Cys-66, Cys-72, Cys-75, and Cys-154. 6 residues coordinate S-adenosyl-L-methionine: Gln-263, Phe-292, Asn-297, Glu-313, Asn-341, and Asp-362. Cys-388 (nucleophile) is an active-site residue.

The protein belongs to the class I-like SAM-binding methyltransferase superfamily. RNA M5U methyltransferase family. RlmD subfamily.

The enzyme catalyses uridine(1939) in 23S rRNA + S-adenosyl-L-methionine = 5-methyluridine(1939) in 23S rRNA + S-adenosyl-L-homocysteine + H(+). Its function is as follows. Catalyzes the formation of 5-methyl-uridine at position 1939 (m5U1939) in 23S rRNA. This chain is 23S rRNA (uracil(1939)-C(5))-methyltransferase RlmD, found in Dechloromonas aromatica (strain RCB).